A 206-amino-acid polypeptide reads, in one-letter code: Putative apoptosis inhibitor 021L (206 aa).

The span at 95–105 (TSKSPVSNQPS) shows a compositional bias: polar residues. A disordered region spans residues 95-114 (TSKSPVSNQPSPEEDEPIPD). Residues 157–195 (CVVCQANVRNVVFVPCNHLATCISCSANPLMPKKCPMCR) form an RING-type zinc finger.

Belongs to the IIV-6 193R family.

Its function is as follows. Plays a role early in infection by preventing host cell apoptosis. The protein is Putative apoptosis inhibitor 021L of Aedes vexans (Inland floodwater mosquito).